Here is a 164-residue protein sequence, read N- to C-terminus: UPF0304 protein YE1336 (164 aa).

Belongs to the UPF0304 family.

This chain is UPF0304 protein YE1336, found in Yersinia enterocolitica serotype O:8 / biotype 1B (strain NCTC 13174 / 8081).